We begin with the raw amino-acid sequence, 417 residues long: NADH-quinone oxidoreductase subunit D (417 aa).

Belongs to the complex I 49 kDa subunit family. In terms of assembly, NDH-1 is composed of 14 different subunits. Subunits NuoB, C, D, E, F, and G constitute the peripheral sector of the complex.

It is found in the cell inner membrane. The enzyme catalyses a quinone + NADH + 5 H(+)(in) = a quinol + NAD(+) + 4 H(+)(out). In terms of biological role, NDH-1 shuttles electrons from NADH, via FMN and iron-sulfur (Fe-S) centers, to quinones in the respiratory chain. The immediate electron acceptor for the enzyme in this species is believed to be ubiquinone. Couples the redox reaction to proton translocation (for every two electrons transferred, four hydrogen ions are translocated across the cytoplasmic membrane), and thus conserves the redox energy in a proton gradient. This chain is NADH-quinone oxidoreductase subunit D, found in Francisella tularensis subsp. mediasiatica (strain FSC147).